Consider the following 193-residue polypeptide: Chaperone protein TorD (193 aa).

Belongs to the TorD/DmsD family. TorD subfamily.

The protein resides in the cytoplasm. Involved in the biogenesis of TorA. Acts on TorA before the insertion of the molybdenum cofactor and, as a result, probably favors a conformation of the apoenzyme that is competent for acquiring the cofactor. The sequence is that of Chaperone protein TorD from Actinobacillus succinogenes (strain ATCC 55618 / DSM 22257 / CCUG 43843 / 130Z).